Consider the following 1770-residue polypeptide: Transposon Ty2-DR2 Gag-Pol polyprotein (1770 aa).

2 stretches are compositionally biased toward polar residues: residues 1-39 and 49-60; these read MESQQLHQNPHSQHGSAYASVTSKEVPSNQDPLAVSASN and KVNSQEETTPGT. Disordered stretches follow at residues 1–89 and 360–449; these read MESQ…QQHG and HSEY…SNDE. The RNA-binding stretch occupies residues 295 to 397; sequence ENNINVSDRL…SSKPRAAKAH (103 aa). A compositionally biased stretch (low complexity) spans 369 to 381; that stretch reads TSPNTTNTKVTTR. 2 stretches are compositionally biased toward polar residues: residues 399–408 and 415–435; these read IATSSKFSRV and ESTVSSQYLSDDNELSLGQQQ. D457 acts as the For protease activity; shared with dimeric partner in catalysis. Residues 579–636 are integrase-type zinc finger-like; sequence NVNKSKSVNKYPYPLIHRMLGHANFRSIQKSLKKNAVTYLKESDIEWSNASTYQCPDC. One can recognise an Integrase catalytic domain in the interval 656–831; that stretch reads ESYEPFQYLH…AGLDITTILP (176 aa). 2 residues coordinate Mg(2+): D667 and D732. Disordered regions lie at residues 1005-1038, 1059-1135, and 1171-1222; these read GGTIESDTTSPRHSSTFTARNQKRPGSPNDMIDL, TEEP…KSSK, and SRQT…LEPP. 2 stretches are compositionally biased toward polar residues: residues 1009-1024 and 1065-1082; these read ESDTTSPRHSSTFTAR and QRNSDTNIKYRTTNSTPS. Residues 1193-1227 carry the Bipartite nuclear localization signal motif; the sequence is KKRSLEDNETEIEVSRDTWNNKNMRSLEPPRSKKR. Positions 1353 to 1491 constitute a Reverse transcriptase Ty1/copia-type domain; it reads NDYYITQLDI…DILGLEIKYQ (139 aa). D1361, D1442, D1443, D1625, E1667, and D1700 together coordinate Mg(2+). One can recognise an RNase H Ty1/copia-type domain in the interval 1625-1767; the sequence is DASYGNQPYY…IKTFKLLTNK (143 aa).

As to quaternary structure, the capsid protein forms a homotrimer, from which the VLPs are assembled. The protease is a homodimer, whose active site consists of two apposed aspartic acid residues. Post-translationally, initially, virus-like particles (VLPs) are composed of the structural unprocessed proteins Gag and Gag-Pol, and also contain the host initiator methionine tRNA (tRNA(i)-Met) which serves as a primer for minus-strand DNA synthesis, and a dimer of genomic Ty RNA. Processing of the polyproteins occurs within the particle and proceeds by an ordered pathway, called maturation. First, the protease (PR) is released by autocatalytic cleavage of the Gag-Pol polyprotein, and this cleavage is a prerequisite for subsequent processing at the remaining sites to release the mature structural and catalytic proteins. Maturation takes place prior to the RT reaction and is required to produce transposition-competent VLPs.

It is found in the cytoplasm. It localises to the nucleus. It catalyses the reaction DNA(n) + a 2'-deoxyribonucleoside 5'-triphosphate = DNA(n+1) + diphosphate. The enzyme catalyses Endonucleolytic cleavage to 5'-phosphomonoester.. Its function is as follows. Capsid protein (CA) is the structural component of the virus-like particle (VLP), forming the shell that encapsulates the retrotransposons dimeric RNA genome. The particles are assembled from trimer-clustered units and there are holes in the capsid shells that allow for the diffusion of macromolecules. CA also has nucleocapsid-like chaperone activity, promoting primer tRNA(i)-Met annealing to the multipartite primer-binding site (PBS), dimerization of Ty2 RNA and initiation of reverse transcription. In terms of biological role, the aspartyl protease (PR) mediates the proteolytic cleavages of the Gag and Gag-Pol polyproteins after assembly of the VLP. Reverse transcriptase/ribonuclease H (RT) is a multifunctional enzyme that catalyzes the conversion of the retro-elements RNA genome into dsDNA within the VLP. The enzyme displays a DNA polymerase activity that can copy either DNA or RNA templates, and a ribonuclease H (RNase H) activity that cleaves the RNA strand of RNA-DNA heteroduplexes during plus-strand synthesis and hydrolyzes RNA primers. The conversion leads to a linear dsDNA copy of the retrotransposon that includes long terminal repeats (LTRs) at both ends. Functionally, integrase (IN) targets the VLP to the nucleus, where a subparticle preintegration complex (PIC) containing at least integrase and the newly synthesized dsDNA copy of the retrotransposon must transit the nuclear membrane. Once in the nucleus, integrase performs the integration of the dsDNA into the host genome. The polypeptide is Transposon Ty2-DR2 Gag-Pol polyprotein (TY2B-DR2) (Saccharomyces cerevisiae (strain ATCC 204508 / S288c) (Baker's yeast)).